The chain runs to 426 residues: D-tagatose-1,6-bisphosphate aldolase subunit KbaZ (426 aa).

It belongs to the GatZ/KbaZ family. KbaZ subfamily. Forms a complex with KbaY.

Its pathway is carbohydrate metabolism; D-tagatose 6-phosphate degradation; D-glyceraldehyde 3-phosphate and glycerone phosphate from D-tagatose 6-phosphate: step 2/2. Its function is as follows. Component of the tagatose-1,6-bisphosphate aldolase KbaYZ that is required for full activity and stability of the Y subunit. Could have a chaperone-like function for the proper and stable folding of KbaY. When expressed alone, KbaZ does not show any aldolase activity. The sequence is that of D-tagatose-1,6-bisphosphate aldolase subunit KbaZ from Escherichia coli O7:K1 (strain IAI39 / ExPEC).